A 237-amino-acid chain; its full sequence is Lectin alpha chain (237 aa).

Residues glutamate 8 and aspartate 10 each coordinate Mn(2+). Positions 10, 12, 14, and 19 each coordinate Ca(2+). An a carbohydrate-binding site is contributed by tyrosine 12. The Mn(2+) site is built by aspartate 19 and histidine 24. 99–100 contacts a carbohydrate; sequence LY. Aspartate 208 provides a ligand contact to Ca(2+). Arginine 228 provides a ligand contact to a carbohydrate.

Belongs to the leguminous lectin family. In terms of assembly, homotetramer. In terms of processing, the beta and gamma chains are produced by partial proteolytic processing of the lectin alpha chain by an asparaginyl endopeptidase.

The protein resides in the vacuole. It localises to the aleurone grain. Its function is as follows. D-mannose/D-glucose-binding lectin with hemagglutinating activity towards rabbit and human erythrocytes. In rats, elicits an acute inflammatory response by inducing neutrophil migration and induces dose-dependent paw edema. This is Lectin alpha chain from Macropsychanthus wilsonii (Wilson's clusterpea).